Consider the following 874-residue polypeptide: MKTTSEIRQSFLDFFHSKGHTVVPSSSLVPENDPTLLFTNAGMNQFKDVFLGLEKRPYTRATTAQRCVRAGGKHNDLENVGYTARHHTFFEMMGNFSFGDYFKHDAIQFGWEYLTSPQWLGLPKEKLYVTVYETDDEAYDIWNKIVGVPTDHIIRIGDNKGAPYASDNFWAMGDTGPCGPCTEIFYDHGETFWGGLPGSPEEDGDRYIEVWNIVFMQFNRLADGTMEKLPKPSVDTGMGLERMTAVMQHVNSNYETDIFQTLIKEVAGLLNVTDLDNKSLRVVADHIRACSYLIADGVVPSNEGRGYVLRRIIRRAVRHGNLLGAKEAFFYKLVPTLATVMGHAGEVLTQKQAHIQKTLKAEEEQFARTLERGLALLEDALTKVENNTLSGEVAFKLYDTYGFPLDLTADVCREREITIDEAGFEAEMTAQRERAKASSNFGADYNNVIKVEGQTDFIGYDNLAAQATIVGLFSNGKAVDTIQSGESAVIILDQTPFYAEMGGQVGDSGLISTEICNFAVNDTQKYGQVFGHIGQLTSGSLSIGDKVTATVDATRRVAITANHSATHLLHSALREVLGDHVAQKGSLVSENILRFDFSQPEAISKSQLEEIERIVNRKIRENIQVTIETMDIESAKKKGAMALFGEKYGDVVRVVGMTEFSIELCGGTHVQRTGDIGLFKLVSEGAVAAGIRRVEAVTAETAIEWLHNQQKVLQQSAEFLKADSNSLVEKIQQLQDKAKRTEKELQQLKDKLAAQAGSELVKQANKINGVNVVVQKLENVEVKSLRTMVDDLKNQLESAIVVFGTVADEKVNLIVGVTKDLSSKVNAGELVGAMAQQVGGKGGGRADMAMAGGSEPQNLDNALKFAEEWIQAKL.

Residues histidine 563, histidine 567, cysteine 665, and histidine 669 each coordinate Zn(2+).

This sequence belongs to the class-II aminoacyl-tRNA synthetase family. It depends on Zn(2+) as a cofactor.

Its subcellular location is the cytoplasm. It catalyses the reaction tRNA(Ala) + L-alanine + ATP = L-alanyl-tRNA(Ala) + AMP + diphosphate. Catalyzes the attachment of alanine to tRNA(Ala) in a two-step reaction: alanine is first activated by ATP to form Ala-AMP and then transferred to the acceptor end of tRNA(Ala). Also edits incorrectly charged Ser-tRNA(Ala) and Gly-tRNA(Ala) via its editing domain. In Actinobacillus pleuropneumoniae serotype 7 (strain AP76), this protein is Alanine--tRNA ligase.